Here is a 194-residue protein sequence, read N- to C-terminus: Glycerol-3-phosphate acyltransferase (194 aa).

5 consecutive transmembrane segments (helical) span residues 4-24 (EIVL…LLLA), 78-98 (EIWV…TVFL), 110-130 (LGVF…IFVF), 137-157 (YVSL…ALIE), and 161-181 (LLIT…RENI).

It belongs to the PlsY family. Probably interacts with PlsX.

The protein localises to the cell inner membrane. The catalysed reaction is an acyl phosphate + sn-glycerol 3-phosphate = a 1-acyl-sn-glycero-3-phosphate + phosphate. The protein operates within lipid metabolism; phospholipid metabolism. Functionally, catalyzes the transfer of an acyl group from acyl-phosphate (acyl-PO(4)) to glycerol-3-phosphate (G3P) to form lysophosphatidic acid (LPA). This enzyme utilizes acyl-phosphate as fatty acyl donor, but not acyl-CoA or acyl-ACP. This is Glycerol-3-phosphate acyltransferase from Geotalea daltonii (strain DSM 22248 / JCM 15807 / FRC-32) (Geobacter daltonii).